Reading from the N-terminus, the 292-residue chain is Acetylglutamate kinase (292 aa).

Substrate contacts are provided by residues 64–65, Arg86, and Asn190; that span reads GG.

Belongs to the acetylglutamate kinase family. ArgB subfamily.

It localises to the cytoplasm. The catalysed reaction is N-acetyl-L-glutamate + ATP = N-acetyl-L-glutamyl 5-phosphate + ADP. It functions in the pathway amino-acid biosynthesis; L-arginine biosynthesis; N(2)-acetyl-L-ornithine from L-glutamate: step 2/4. Functionally, catalyzes the ATP-dependent phosphorylation of N-acetyl-L-glutamate. The sequence is that of Acetylglutamate kinase from Geobacter sp. (strain M21).